Reading from the N-terminus, the 364-residue chain is tRNA-specific 2-thiouridylase MnmA 1 (364 aa).

Residues 10-17 and methionine 36 each bind ATP; that span reads GMSGGVDS. Residue cysteine 106 is the Nucleophile of the active site. A disulfide bridge connects residues cysteine 106 and cysteine 204. Glycine 130 is an ATP binding site. The interval 154–156 is interaction with tRNA; it reads KDQ. Cysteine 204 functions as the Cysteine persulfide intermediate in the catalytic mechanism. The tract at residues 310–311 is interaction with tRNA; the sequence is RY.

This sequence belongs to the MnmA/TRMU family.

It localises to the cytoplasm. The catalysed reaction is S-sulfanyl-L-cysteinyl-[protein] + uridine(34) in tRNA + AH2 + ATP = 2-thiouridine(34) in tRNA + L-cysteinyl-[protein] + A + AMP + diphosphate + H(+). Functionally, catalyzes the 2-thiolation of uridine at the wobble position (U34) of tRNA, leading to the formation of s(2)U34. The chain is tRNA-specific 2-thiouridylase MnmA 1 from Thermoanaerobacter pseudethanolicus (strain ATCC 33223 / 39E) (Clostridium thermohydrosulfuricum).